Reading from the N-terminus, the 75-residue chain is Translational regulator CsrA (75 aa).

It belongs to the CsrA/RsmA family. In terms of assembly, homodimer; the beta-strands of each monomer intercalate to form a hydrophobic core, while the alpha-helices form wings that extend away from the core. Interacts with FliW.

It localises to the cytoplasm. Functionally, a translational regulator that binds mRNA to regulate translation initiation and/or mRNA stability. Usually binds in the 5'-UTR at or near the Shine-Dalgarno sequence preventing ribosome-binding, thus repressing translation. Its function is probably anatagonized by FliW. Inhibits translation of flaA mRNA in vitro. Involved in post-transcriptional regulation of flagellin biosynthesis. The chain is Translational regulator CsrA from Campylobacter jejuni subsp. jejuni serotype O:6 (strain 81116 / NCTC 11828).